The following is a 202-amino-acid chain: Putative transposon Tn552 DNA-invertase bin3 (202 aa).

Residues 1–143 form the Resolvase/invertase-type recombinase catalytic domain; it reads MIIGYARVSS…QGIQVAKEKG (143 aa). The active-site O-(5'-phospho-DNA)-serine intermediate is Ser9.

It belongs to the site-specific recombinase resolvase family.

Functionally, potential DNA invertase. In Staphylococcus aureus, this protein is Putative transposon Tn552 DNA-invertase bin3 (bin3).